Here is a 341-residue protein sequence, read N- to C-terminus: Very-long-chain 3-oxoacyl-CoA reductase (341 aa).

The chain crosses the membrane as a helical span at residues 17-37 (ALYGALLLGVYKLTTFALSLV). NADP(+) is bound by residues Val-63, Asp-117, Asn-144, Tyr-218, Lys-222, Val-251, and Ser-253. Tyr-218 (proton donor) is an active-site residue. The Lowers pKa of active site Tyr role is filled by Lys-222.

The protein belongs to the short-chain dehydrogenases/reductases (SDR) family.

It is found in the endoplasmic reticulum membrane. The catalysed reaction is a very-long-chain (3R)-3-hydroxyacyl-CoA + NADP(+) = a very-long-chain 3-oxoacyl-CoA + NADPH + H(+). Its pathway is lipid metabolism; fatty acid biosynthesis. In terms of biological role, component of the microsomal membrane bound fatty acid elongation system, which produces the 26-carbon very long-chain fatty acids (VLCFA) from palmitate. Catalyzes the reduction of the 3-ketoacyl-CoA intermediate that is formed in each cycle of fatty acid elongation. VLCFAs serve as precursors for ceramide and sphingolipids. This is Very-long-chain 3-oxoacyl-CoA reductase from Meyerozyma guilliermondii (strain ATCC 6260 / CBS 566 / DSM 6381 / JCM 1539 / NBRC 10279 / NRRL Y-324) (Yeast).